The primary structure comprises 325 residues: Fatty acid synthase alpha subunit hexA (325 aa).

Asp-209 provides a ligand contact to Mg(2+). Residues 209-211, 255-265, 279-282, and 301-303 each bind acetyl-CoA; these read DLV, EAVFKCLHTQT, KSDN, and ISH. Ser-302 contributes to the Mg(2+) binding site.

This sequence belongs to the thiolase-like superfamily. Fungal fatty acid synthetase subunit alpha family. [Alpha(6)beta(6)] hexamers of two multifunctional subunits (alpha and beta). 4'-phosphopantetheine is transferred from CoA to a specific serine of the acyl carrier domain by the C-terminal PPT domain. This modification is essential for activity because fatty acids are bound in thioester linkage to the sulfhydryl of the prosthetic group.

The enzyme catalyses acetyl-CoA + n malonyl-CoA + 2n NADPH + 4n H(+) = a long-chain-acyl-CoA + n CoA + n CO2 + 2n NADP(+).. It catalyses the reaction a fatty acyl-[ACP] + malonyl-[ACP] + H(+) = a 3-oxoacyl-[ACP] + holo-[ACP] + CO2. It carries out the reaction a (3R)-hydroxyacyl-[ACP] + NADP(+) = a 3-oxoacyl-[ACP] + NADPH + H(+). Its pathway is mycotoxin biosynthesis. Fatty acid synthase alpha subunit; part of the fragmented gene cluster that mediates the biosynthesis of dothistromin (DOTH), a polyketide toxin very similar in structure to the aflatoxin precursor, versicolorin B. The first step of the pathway is the conversion of acetate to norsolorinic acid (NOR) and requires the fatty acid synthase subunits hexA and hexB, as well as the polyketide synthase pksA. PksA combines a hexanoyl starter unit and 7 malonyl-CoA extender units to synthesize the precursor NOR. The hexanoyl starter unit is provided to the acyl-carrier protein (ACP) domain by the fungal fatty acid synthase hexA/hexB. The second step is the conversion of NOR to averantin (AVN) and requires the norsolorinic acid ketoreductase nor1, which catalyzes the dehydration of norsolorinic acid to form (1'S)-averantin. The cytochrome P450 monooxygenase avnA then catalyzes the hydroxylation of AVN to 5'hydroxyaverantin (HAVN). The next step is performed by adhA that transforms HAVN to averufin (AVF). Averufin might then be converted to hydroxyversicolorone by cypX and avfA. Hydroxyversicolorone is further converted versiconal hemiacetal acetate (VHA) by moxY. VHA is then the substrate for the versiconal hemiacetal acetate esterase est1 to yield versiconal (VAL). Versicolorin B synthase vbsA then converts VAL to versicolorin B (VERB) by closing the bisfuran ring. Then, the activity of the versicolorin B desaturase verB leads to versicolorin A (VERA). DotB, a predicted chloroperoxidase, may perform epoxidation of the A-ring of VERA. Alternatively, a cytochrome P450, such as cypX or avnA could catalyze this step. It is also possible that another, uncharacterized, cytochrome P450 enzyme is responsible for this step. Opening of the epoxide could potentially be achieved by the epoxide hydrolase epoA. However, epoA seems not to be required for DOTH biosynthesis, but other epoxide hydrolases may have the ability to complement this hydrolysis. Alternatively, opening of the epoxide ring could be achieved non-enzymatically. The next step is the deoxygenation of ring A to yield the 5,8-dihydroxyanthraquinone which is most likely catalyzed by the NADPH dehydrogenase encoded by ver1. The last stages of DOTH biosynthesis are proposed to involve hydroxylation of the bisfuran. OrdB and norB might have oxidative roles here. An alternative possibility is that cytochrome P450 monoogenases such as avnA and cypX might perform these steps in addition to previously proposed steps. The sequence is that of Fatty acid synthase alpha subunit hexA from Dothistroma septosporum (Red band needle blight fungus).